The following is a 308-amino-acid chain: Autophagy-related protein 3 (308 aa).

Positions 83 to 159 (NFVETQTTET…NELADDDDDI (77 aa)) are flexible region. Positions 89–121 (TTETRDVGDGWELEGQSEGERESGREDTKSNEE) are disordered. Positions 106-120 (EGERESGREDTKSNE) are enriched in basic and acidic residues. The active-site Glycyl thioester intermediate is cysteine 235. The interval 239-283 (NVMKVLMEKVRASRHRARDTEAQKNAEEDWEDLQSDIDDGLRVDQ) is handle region.

This sequence belongs to the ATG3 family. As to quaternary structure, monomer. Interacts with ATG8 through an intermediate thioester bond between Cys-235 and the C-terminal Gly of ATG8. Interacts with the C-terminal region of the E1-like ATG7 enzyme. Also interacts with the ATG12-ATG5 conjugate.

The protein localises to the cytoplasm. Its function is as follows. E2 conjugating enzyme required for the cytoplasm to vacuole transport (Cvt) and autophagy. Required for selective autophagic degradation of the nucleus (nucleophagy) as well as for mitophagy which contributes to regulate mitochondrial quantity and quality by eliminating the mitochondria to a basal level to fulfill cellular energy requirements and preventing excess ROS production. Responsible for the E2-like covalent binding of phosphatidylethanolamine to the C-terminal Gly of ATG8. The ATG12-ATG5 conjugate plays a role of an E3 and promotes the transfer of ATG8 from ATG3 to phosphatidylethanolamine (PE). This step is required for the membrane association of ATG8. The formation of the ATG8-phosphatidylethanolamine conjugate is essential for autophagy and for the cytoplasm to vacuole transport (Cvt). The ATG8-PE conjugate mediates tethering between adjacent membranes and stimulates membrane hemifusion, leading to expansion of the autophagosomal membrane during autophagy. In Kluyveromyces marxianus (strain DMKU3-1042 / BCC 29191 / NBRC 104275) (Yeast), this protein is Autophagy-related protein 3.